The chain runs to 931 residues: Up-regulator of cell proliferation (931 aa).

Position 3 is a phosphoserine (S3). In terms of domain architecture, VLIG-type G spans 689–929 (RSRLVVLSTV…NIQQLIELVR (241 aa)).

It belongs to the TRAFAC class dynamin-like GTPase superfamily. Very large inducible GTPase (VLIG) family. In terms of tissue distribution, strongly expressed in hepatitis B virus-infected liver and in HCC cells. Also highly expressed in well-differentiated gastric cancer tissues and various gastric cancer cell lines.

It localises to the cytoplasm. The protein localises to the nucleus. Functionally, may be involved in cell cycle progression through the regulation of cyclin D1 expression. May participate in the development of hepatocellular carcinoma (HCC) by promoting hepatocellular growth and survival. May play an important role in development of gastric cancer. In Homo sapiens (Human), this protein is Up-regulator of cell proliferation (URGCP).